The sequence spans 293 residues: Probable endonuclease 4 (293 aa).

The Zn(2+) site is built by His78, His118, Glu154, Asp188, His191, His225, Asp238, His240, and Glu270.

This sequence belongs to the AP endonuclease 2 family. Requires Zn(2+) as cofactor.

It catalyses the reaction Endonucleolytic cleavage to 5'-phosphooligonucleotide end-products.. Functionally, endonuclease IV plays a role in DNA repair. It cleaves phosphodiester bonds at apurinic or apyrimidinic (AP) sites, generating a 3'-hydroxyl group and a 5'-terminal sugar phosphate. The polypeptide is Probable endonuclease 4 (Vibrio vulnificus (strain CMCP6)).